Consider the following 689-residue polypeptide: Protein CFAP20DC (689 aa).

Disordered stretches follow at residues G143–K179, L217–R236, L241–N262, S333–L424, and S583–E660. The segment covering R150–T176 has biased composition (polar residues). Positions E343–P359 are enriched in polar residues. Residues S394–E405 show a composition bias toward acidic residues. Positions I411–P421 are enriched in polar residues. The span at S583–T593 shows a compositional bias: low complexity.

The protein is Protein CFAP20DC (CFAP20DC) of Macaca fascicularis (Crab-eating macaque).